The primary structure comprises 398 residues: Tyrosine--tRNA ligase (398 aa).

Residues 48–57 (PTGADIHLGH) carry the 'HIGH' region motif. Residues 235-239 (KMSKS) carry the 'KMSKS' region motif. Lys238 is a binding site for ATP. The S4 RNA-binding domain maps to 334-398 (VKLAYLLGAT…GKNKFMRLVP (65 aa)).

It belongs to the class-I aminoacyl-tRNA synthetase family. TyrS type 2 subfamily. In terms of assembly, homodimer.

Its subcellular location is the cytoplasm. It catalyses the reaction tRNA(Tyr) + L-tyrosine + ATP = L-tyrosyl-tRNA(Tyr) + AMP + diphosphate + H(+). Functionally, catalyzes the attachment of tyrosine to tRNA(Tyr) in a two-step reaction: tyrosine is first activated by ATP to form Tyr-AMP and then transferred to the acceptor end of tRNA(Tyr). The protein is Tyrosine--tRNA ligase of Nostoc sp. (strain PCC 7120 / SAG 25.82 / UTEX 2576).